The chain runs to 254 residues: L-arabinose 1-dehydrogenase (NAD(P)(+)) (254 aa).

Catalysis depends on Tyr-142, which acts as the Proton acceptor. 2 residues coordinate NAD(+): Tyr-142 and Lys-146.

The protein belongs to the NAD(P)-dependent epimerase/dehydratase family. As to quaternary structure, homotetramer.

The enzyme catalyses alpha-L-arabinopyanose + NAD(+) = L-arabinono-1,4-lactone + NADH + H(+). The catalysed reaction is alpha-L-arabinopyanose + NADP(+) = L-arabinono-1,4-lactone + NADPH + H(+). Its pathway is carbohydrate degradation; L-arabinose degradation via L-arabinono-1,4-lactone pathway. Functionally, L-AraDH initiates the degradation of L-arabinose. Catalyzes the NAD(P)(+)-dependent conversion of L-arabinose to L-arabino-gamma-lactone. It is highly specific for L-arabinose as substrate and can use both NADP(+) and NAD(+) as electron acceptor, with a slight preference for NADP(+). This is L-arabinose 1-dehydrogenase (NAD(P)(+)) from Haloferax volcanii (strain ATCC 29605 / DSM 3757 / JCM 8879 / NBRC 14742 / NCIMB 2012 / VKM B-1768 / DS2) (Halobacterium volcanii).